The primary structure comprises 494 residues: Monocarboxylate transporter 1 (494 aa).

Over Met1–Val22 the chain is Cytoplasmic. The chain crosses the membrane as a helical span at residues Val23–Phe44. Lys38 contributes to the (S)-lactate binding site. Over Lys45–Thr55 the chain is Extracellular. Residues Ser56–Val80 traverse the membrane as a helical segment. The Cytoplasmic portion of the chain corresponds to Asn81–Gly84. Residues Ser85 to Phe105 form a helical membrane-spanning segment. Topologically, residues Cys106–Val109 are extracellular. The chain crosses the membrane as a helical span at residues Gln110–Leu132. Over Thr133–Ala146 the chain is Cytoplasmic. The chain crosses the membrane as a helical span at residues Asn147 to Phe169. The Extracellular portion of the chain corresponds to Gly170–Trp174. The helical transmembrane segment at Arg175–Leu194 threads the bilayer. Over Met195–Arg254 the chain is Cytoplasmic. Ser210, Ser213, and Ser220 each carry phosphoserine. Thr224 carries the post-translational modification Phosphothreonine. Ser230 bears the Phosphoserine mark. The chain crosses the membrane as a helical span at residues Gly255–Gly281. Over Lys282–Ser288 the chain is Extracellular. Residues Glu289 to Gly310 form a helical membrane-spanning segment. A H(+)-binding site is contributed by Asp302. Residue Arg306 participates in (S)-lactate binding. At Leu311–Arg321 the chain is on the cytoplasmic side. The chain crosses the membrane as a helical span at residues Val322 to Leu342. The Extracellular segment spans residues Ser343–Tyr346. The helical transmembrane segment at Val347 to Phe368 threads the bilayer. Residues Glu369–Ser382 lie on the Cytoplasmic side of the membrane. A helical membrane pass occupies residues Ala383–Gly403. Residues Arg404–Tyr414 lie on the Extracellular side of the membrane. The helical transmembrane segment at Thr415–Ile436 threads the bilayer. Over Asn437–Val494 the chain is Cytoplasmic. Residues Lys446–Lys472 show a composition bias toward basic and acidic residues. A disordered region spans residues Lys446–Val494. Phosphothreonine is present on Thr459. The residue at position 460 (Ser460) is a Phosphoserine. At Thr461 the chain carries Phosphothreonine. Over residues Glu473–Gly485 the composition is skewed to polar residues. Phosphoserine occurs at positions 476, 483, 484, and 492.

This sequence belongs to the major facilitator superfamily. Monocarboxylate porter (TC 2.A.1.13) family. Interacts with BSG. Interacts with EMB. Interaction with either BSG or EMB is required for expression at the cell membrane. As to expression, detected in erythrocytes (at protein level). Detected in brain, heart, kidney, lung, muscle, jejunum enterocytes and brain capillaries.

The protein resides in the cell membrane. It is found in the basolateral cell membrane. It localises to the apical cell membrane. The enzyme catalyses (S)-lactate(in) + H(+)(in) = (S)-lactate(out) + H(+)(out). The catalysed reaction is pyruvate(out) + H(+)(out) = pyruvate(in) + H(+)(in). It carries out the reaction acetoacetate(out) + H(+)(out) = acetoacetate(in) + H(+)(in). It catalyses the reaction (S)-3-hydroxybutanoate(out) + H(+)(out) = (S)-3-hydroxybutanoate(in) + H(+)(in). The enzyme catalyses (R)-3-hydroxybutanoate(out) + H(+)(out) = (R)-3-hydroxybutanoate(in) + H(+)(in). The catalysed reaction is 3-methyl-2-oxobutanoate(out) + H(+)(out) = 3-methyl-2-oxobutanoate(in) + H(+)(in). It carries out the reaction 4-methyl-2-oxopentanoate(out) + H(+)(out) = 4-methyl-2-oxopentanoate(in) + H(+)(in). Its activity is regulated as follows. Inhibited by stilbene disulfonates, such as di-isothiocyanostilbene disulfonate(DIDS), a cross-linking reagent that forms covalent linkages with lysine groups. Its function is as follows. Bidirectional proton-coupled monocarboxylate transporter. Catalyzes the rapid transport across the plasma membrane of many monocarboxylates such as lactate, pyruvate, acetate and the ketone bodies acetoacetate and beta-hydroxybutyrate, and thus contributes to the maintenance of intracellular pH. The transport direction is determined by the proton motive force and the concentration gradient of the substrate monocarboxylate. MCT1 is a major lactate exporter. Plays a role in cellular responses to a high-fat diet by modulating the cellular levels of lactate and pyruvate that contribute to the regulation of central metabolic pathways and insulin secretion, with concomitant effects on plasma insulin levels and blood glucose homeostasis. Facilitates the protonated monocarboxylate form of succinate export, that its transient protonation upon muscle cell acidification in exercising muscle and ischemic heart. Functions via alternate outward- and inward-open conformation states. Protonation and deprotonation of 302-Asp is essential for the conformational transition. The sequence is that of Monocarboxylate transporter 1 (Slc16a1) from Rattus norvegicus (Rat).